A 195-amino-acid polypeptide reads, in one-letter code: Transcription factor 15 (195 aa).

Positions 44 to 65 (LEAARRGPGPGSGRRASNGAGP) are disordered. Low complexity predominate over residues 56–65 (GRRASNGAGP). S60 bears the Phosphoserine mark. The region spanning 70-122 (RQRQAANARERDRTQSVNTAFTALRTLIPTEPVDRKLSKIETLRLASSYIAHL) is the bHLH domain.

Heterodimer; efficient DNA binding requires dimerization with another bHLH protein, such as TCF3/E12. Interacts with MEOX2. As to expression, expressed in heart and skeletal muscle. Specifically expressed in a subpopulation of embryonic stem cells (ESCs), that are still undifferentiated but primed for ifferentiation. Expressed in hematopoietic stem cells (HSCs).

The protein resides in the nucleus. Its function is as follows. Early transcription factor that plays a key role in somitogenesis, paraxial mesoderm development and regulation of stem cell pluripotency. Essential for the mesenchymal to epithelial transition associated with somite formation. Required for somite morphogenesis, thereby regulating patterning of the axial skeleton and skeletal muscles. Required for proper localization of somite epithelium markers during the mesenchymal to epithelial transition. Also plays a key role in regulation of stem cell pluripotency. Promotes pluripotency exit of embryonic stem cells (ESCs) by priming ESCs for differentiation. Acts as a key regulator of self-renewal of hematopoietic stem cells (HSCs) by mediating HSCs quiescence and long-term self-renewal. Together with MEOX2, regulates transcription in heart endothelial cells to regulate fatty acid transport across heart endothelial cells. Acts by forming a heterodimer with another helix-loop-helix (bHLH) protein, such as TCF3/E12, that binds DNA on E-box motifs (5'-CANNTG-3') and activates transcription of target genes. The protein is Transcription factor 15 of Mus musculus (Mouse).